The chain runs to 533 residues: Flavin-containing monooxygenase 5 (533 aa).

Arginine 5 is subject to Dimethylated arginine. Residues 10-14 (GGGVS), glutamate 33, and 41-42 (LW) each bind FAD. At serine 54 the chain carries Phosphoserine. The residue at position 56 (tyrosine 56) is a Phosphotyrosine. Residue serine 58 is modified to Phosphoserine. Position 62–63 (62–63 (NT)) interacts with FAD. Position 196-199 (196-199 (SGGD)) interacts with NADP(+). At serine 280 the chain carries Phosphoserine. Phosphothreonine is present on threonine 284. Position 401 is a phosphoserine (serine 401). The chain crosses the membrane as a helical span at residues 513–533 (TMTIGKFMLALAFFAIIIAYF).

The protein belongs to the FMO family. FAD serves as cofactor. As to expression, expressed in fetal and adult liver.

Its subcellular location is the microsome membrane. It is found in the endoplasmic reticulum membrane. It catalyses the reaction N,N-dimethylaniline + NADPH + O2 + H(+) = N,N-dimethylaniline N-oxide + NADP(+) + H2O. The enzyme catalyses NADPH + O2 + H(+) = H2O2 + NADP(+). It carries out the reaction heptan-2-one + NADPH + O2 + H(+) = pentyl acetate + NADP(+) + H2O. The catalysed reaction is octan-3-one + NADPH + O2 + H(+) = pentyl propanoate + NADP(+) + H2O. It catalyses the reaction octan-3-one + NADPH + O2 + H(+) = ethyl hexanoate + NADP(+) + H2O. The enzyme catalyses hexan-3-one + NADPH + O2 + H(+) = ethyl butanoate + NADP(+) + H2O. It carries out the reaction hexan-3-one + NADPH + O2 + H(+) = propyl propanoate + NADP(+) + H2O. The catalysed reaction is heptan-4-one + NADPH + O2 + H(+) = propyl butanoate + NADP(+) + H2O. It catalyses the reaction (2E)-geranial + NADPH + O2 + H(+) = (1E)-2,6-dimethylhepta-1,5-dien-1-yl formate + NADP(+) + H2O. The enzyme catalyses sulcatone + NADPH + O2 + H(+) = 4-methylpent-3-en-1-yl acetate + NADP(+) + H2O. Acts as a Baeyer-Villiger monooxygenase on a broad range of substrates. Catalyzes the insertion of an oxygen atom into a carbon-carbon bond adjacent to a carbonyl, which converts ketones to esters. Active on diverse carbonyl compounds, whereas soft nucleophiles are mostly non- or poorly reactive. In contrast with other forms of FMO it is non- or poorly active on 'classical' substrates such as drugs, pesticides, and dietary components containing soft nucleophilic heteroatoms. Able to oxidize drug molecules bearing a carbonyl group on an aliphatic chain, such as nabumetone and pentoxifylline. Also, in the absence of substrates, shows slow but yet significant NADPH oxidase activity. Acts as a positive modulator of cholesterol biosynthesis as well as glucose homeostasis, promoting metabolic aging via pleiotropic effects. This is Flavin-containing monooxygenase 5 from Homo sapiens (Human).